We begin with the raw amino-acid sequence, 843 residues long: RNA-binding protein 25 (843 aa).

Residues 1-30 are disordered; it reads MSFPPHLNRPPMGIPALPPGIPPPQFPGFP. Positions 12–30 are enriched in pro residues; the sequence is MGIPALPPGIPPPQFPGFP. The RRM domain maps to 87–164; sequence TTVFVGNISE…KKLLVKVDAK (78 aa). N6-acetyllysine is present on lysine 135. Disordered stretches follow at residues 171–202 and 219–243; these read EWKAKKKASNGNARPETVTNDDEEALDEETKR and SSELNAPSQESDSHPRKKKKEKKED. Residues serine 226 and serine 229 each carry the phosphoserine modification. Residues lysine 261, lysine 273, and lysine 430 each participate in a glycyl lysine isopeptide (Lys-Gly) (interchain with G-Cter in SUMO2) cross-link. Composition is skewed to basic and acidic residues over residues 280-433 and 521-573; these read EISK…KRDR and RLRD…ERRR. 2 disordered regions span residues 280–442 and 498–688; these read EISK…DAYE and EFLE…KRKK. Positions 285 to 644 are necessary for nuclear speckle localization; the sequence is RDTHKKLEEE…PNTPGDESPC (360 aa). Lysine 578 participates in a covalent cross-link: Glycyl lysine isopeptide (Lys-Gly) (interchain with G-Cter in SUMO2). Serine 583 is modified (phosphoserine). Over residues 590–599 the composition is skewed to basic and acidic residues; it reads KQEKEEKREE. The segment covering 621 to 630 has biased composition (low complexity); that stretch reads SSAPSVSSAS. Residue lysine 671 forms a Glycyl lysine isopeptide (Lys-Gly) (interchain with G-Cter in SUMO2) linkage. The span at 674-683 shows a compositional bias: polar residues; that stretch reads ASNSPGQPNS. Serine 677 and serine 683 each carry phosphoserine. Glycyl lysine isopeptide (Lys-Gly) (interchain with G-Cter in SUMO2) cross-links involve residues lysine 688 and lysine 697. The residue at position 703 (serine 703) is a Phosphoserine. Lysine 722 is covalently cross-linked (Glycyl lysine isopeptide (Lys-Gly) (interchain with G-Cter in SUMO2)). The PWI domain occupies 750–843; the sequence is PELFAYPLDW…TEAKKIGLVK (94 aa).

In terms of assembly, interacts with LUC7L3 and SRRM1. Specifically associates with functional splicing complexes, including Sm proteins and U1, U2, U4, U5 and U6 snRNAs. Associates with exon junction complex (EJC) proteins, including APEX1, DDX39B, NCBP1, RBM8A and RNPS1. Interaction with NCBP1 is RNA-dependent. In terms of processing, sumoylated.

It localises to the nucleus speckle. It is found in the cytoplasm. RNA-binding protein that acts as a regulator of alternative pre-mRNA splicing. Involved in apoptotic cell death through the regulation of the apoptotic factor BCL2L1 isoform expression. Modulates the ratio of proapoptotic BCL2L1 isoform S to antiapoptotic BCL2L1 isoform L mRNA expression. When overexpressed, stimulates proapoptotic BCL2L1 isoform S 5'-splice site (5'-ss) selection, whereas its depletion caused the accumulation of antiapoptotic BCL2L1 isoform L. Promotes BCL2L1 isoform S 5'-ss usage through the 5'-CGGGCA-3' RNA sequence. Its association with LUC7L3 promotes U1 snRNP binding to a weak 5' ss in a 5'-CGGGCA-3'-dependent manner. Binds to the exonic splicing enhancer 5'-CGGGCA-3' RNA sequence located within exon 2 of the BCL2L1 pre-mRNA. Also involved in the generation of an abnormal and truncated splice form of SCN5A in heart failure. In Homo sapiens (Human), this protein is RNA-binding protein 25 (RBM25).